We begin with the raw amino-acid sequence, 273 residues long: Rhamnulose-1-phosphate aldolase (273 aa).

Glu-117 is an active-site residue. Positions 140, 142, and 211 each coordinate Zn(2+).

Belongs to the aldolase class II family. RhaD subfamily. It depends on Zn(2+) as a cofactor.

The protein resides in the cytoplasm. The enzyme catalyses L-rhamnulose 1-phosphate = (S)-lactaldehyde + dihydroxyacetone phosphate. The protein operates within carbohydrate degradation; L-rhamnose degradation; glycerone phosphate from L-rhamnose: step 3/3. Catalyzes the reversible cleavage of L-rhamnulose-1-phosphate to dihydroxyacetone phosphate (DHAP) and L-lactaldehyde. This Listeria monocytogenes serotype 4b (strain CLIP80459) protein is Rhamnulose-1-phosphate aldolase.